Here is a 155-residue protein sequence, read N- to C-terminus: MGRSRSRSPRRERRRSRSTSRERERRRRERSRSRERDRRRSRSRSPHRRRSRSPRRHRSTSPSPSRLKERRDEEKKETKETKSKERQITEEDLEGKTEEEIEMMKLMGFASFDSTKGKKVDGSVNAYAINVSQKRKYRQYMNRKGGFNRPLDFIA.

Basic residues-rich tracts occupy residues 1–31 (MGRS…RERS) and 39–59 (RRSR…RHRS). A disordered region spans residues 1-97 (MGRSRSRSPR…ITEEDLEGKT (97 aa)). 2 positions are modified to phosphoserine: S61 and S65. The span at 66-97 (RLKERRDEEKKETKETKSKERQITEEDLEGKT) shows a compositional bias: basic and acidic residues. Phosphoserine is present on residues S111, S114, and S132.

Belongs to the SNUT3 family. Part of a tri-snRNP complex. Phosphorylated in vitro by snRNP-associated protein kinase.

It localises to the nucleus. Its function is as follows. May play a role in mRNA splicing. In Homo sapiens (Human), this protein is U4/U6.U5 small nuclear ribonucleoprotein 27 kDa protein (SNRNP27).